Here is a 319-residue protein sequence, read N- to C-terminus: Urease accessory protein UreD (319 aa).

Residues 298–319 (QEQPLPPSSFKTNTAVPAVRTH) are disordered.

It belongs to the UreD family. UreD, UreF and UreG form a complex that acts as a GTP-hydrolysis-dependent molecular chaperone, activating the urease apoprotein by helping to assemble the nickel containing metallocenter of UreC. The UreE protein probably delivers the nickel.

The protein localises to the cytoplasm. In terms of biological role, required for maturation of urease via the functional incorporation of the urease nickel metallocenter. This is Urease accessory protein UreD from Synechococcus sp. (strain WH7805).